Reading from the N-terminus, the 228-residue chain is Ribose-5-phosphate isomerase A (228 aa).

Residues 32 to 35 (TGST), 85 to 88 (DGAD), and 98 to 101 (KGGG) each bind substrate. The active-site Proton acceptor is E107. K125 contacts substrate.

It belongs to the ribose 5-phosphate isomerase family. Homodimer.

It carries out the reaction aldehydo-D-ribose 5-phosphate = D-ribulose 5-phosphate. Its pathway is carbohydrate degradation; pentose phosphate pathway; D-ribose 5-phosphate from D-ribulose 5-phosphate (non-oxidative stage): step 1/1. Its function is as follows. Catalyzes the reversible conversion of ribose-5-phosphate to ribulose 5-phosphate. This is Ribose-5-phosphate isomerase A from Cupriavidus taiwanensis (strain DSM 17343 / BCRC 17206 / CCUG 44338 / CIP 107171 / LMG 19424 / R1) (Ralstonia taiwanensis (strain LMG 19424)).